The sequence spans 476 residues: CBL-interacting protein kinase 30 (476 aa).

One can recognise a Protein kinase domain in the interval 17–272; the sequence is YKLGRLLGRG…ISKIMDRPWF (256 aa). ATP contacts are provided by residues 23-31 and K46; that span reads LGRGTFAKV. The active-site Proton acceptor is the D140. Residues 158-187 form an activation loop region; that stretch reads DFGLSALDGGLRGDGLLHTTCGTPAYVAPE. Residues 296–315 are disordered; that stretch reads KEASQQHDDEEDDGFAREKK. The NAF domain maps to 299 to 353; it reads SQQHDDEEDDGFAREKKKRSNVIMSSPVIDVRPSSMNAFDIISRSRGLDLSKMFD. Residues 358–387 form a PPI region; sequence RSEARFSTRETTTAIVSKLEEIAEAGRFSF.

This sequence belongs to the protein kinase superfamily. CAMK Ser/Thr protein kinase family. SNF1 subfamily. Mn(2+) serves as cofactor.

It catalyses the reaction L-seryl-[protein] + ATP = O-phospho-L-seryl-[protein] + ADP + H(+). It carries out the reaction L-threonyl-[protein] + ATP = O-phospho-L-threonyl-[protein] + ADP + H(+). In terms of biological role, CIPK serine-threonine protein kinases interact with CBL proteins. Binding of a CBL protein to the regulatory NAF domain of CIPK protein lead to the activation of the kinase in a calcium-dependent manner. The sequence is that of CBL-interacting protein kinase 30 (CIPK30) from Oryza sativa subsp. japonica (Rice).